The sequence spans 346 residues: Phosphoribosylformylglycinamidine cyclo-ligase (346 aa).

This sequence belongs to the AIR synthase family.

The protein resides in the cytoplasm. It catalyses the reaction 2-formamido-N(1)-(5-O-phospho-beta-D-ribosyl)acetamidine + ATP = 5-amino-1-(5-phospho-beta-D-ribosyl)imidazole + ADP + phosphate + H(+). The protein operates within purine metabolism; IMP biosynthesis via de novo pathway; 5-amino-1-(5-phospho-D-ribosyl)imidazole from N(2)-formyl-N(1)-(5-phospho-D-ribosyl)glycinamide: step 2/2. The protein is Phosphoribosylformylglycinamidine cyclo-ligase of Synechococcus sp. (strain CC9311).